The following is a 2551-amino-acid chain: Piezo-type mechanosensitive ion channel component (2551 aa).

Transmembrane regions (helical) follow at residues 5–25 (YACMVLQRIVVPAVLVLAALM), 27–47 (PVGISFVYLLMFFVSPFVPLA), 56–76 (VTAFFIILLTLSTLVLLGHIT), 106–126 (FIDLQPFAIIEWLVPEVLVFA), 204–226 (IHFEGLVKISPLFCLATLFFAAV), 231–250 (VPGGFYFLIFLLSGTYWATC), 256–276 (GFALLLRCVMVVLVLHSLSIV), and 320–340 (LSLDSYLNPFALFFAYFALAL). The segment at 354 to 375 (STRKARTPQPLESGSSVAPSVT) is disordered. The segment covering 363 to 375 (PLESGSSVAPSVT) has biased composition (polar residues). The next 9 helical transmembrane spans lie at 395–415 (TTTSILDQISYGFVSVGGFIY), 424–444 (ILMMAWSIVYHSWLTFVLLLS), 463–483 (PFIVLYAEALLIAQYIYGMDL), 516–536 (VPLIVKTAFVLMFWVTSRQFF), 548–568 (LADFIAPLQITVGSAGSSYLI), 588–608 (LLVRLWIWLLVLVIFLCAITG), 611–631 (MTGFRICYMALFLFFLLVFQS), 639–659 (IMYGFWLFLIFYAMSILILIY), and 695–715 (FLHLVSPTIIVILTVIQVHYF). Positions 731-741 (GSAQQKPTETT) are enriched in polar residues. Residues 731-772 (GSAQQKPTETTALEPAPSKRRGSAGSLRKSQGPSAEAAPGAT) form a disordered region. 12 helical membrane passes run 819 to 839 (IAAFVCSVSEVCVLHIIFVGF), 857 to 877 (LISFIVTVIVLSKMIYQIEYL), 910 to 930 (LMSLLRTYIIYMVIVTMHAVI), 973 to 993 (LNFGFYKFGIEISLIALVSTI), 994 to 1014 (TYRQDIVAVVYALWLVVLLLL), 1022 to 1042 (IWGVFQAFFAISILTQYIVLV), 1071 to 1091 (GALHFNHVPKLIFDFIVLVIL), 1152 to 1172 (VLCGFYWFTLAVVFLAGTNIA), 1174 to 1194 (LLALGYLIGAFIFLWQGSDFY), 1198 to 1218 (IHTIIFRWKWLLAFNVANILI), 1239 to 1259 (WLVHMLGITCTSNVLTEQIML), and 1275 to 1295 (ITHQVVLLWDTICFAFIIFQL). 2 disordered regions span residues 1426 to 1521 (NITE…AKDS) and 1592 to 1658 (ESDE…PQQQ). Over residues 1430 to 1448 (SEMKMQRRKTLYDKSKDAP) the composition is skewed to basic and acidic residues. The span at 1466–1477 (ATASSSASPAPT) shows a compositional bias: low complexity. Residues 1497 to 1511 (QTSKETSDSKSKMEV) are compositionally biased toward basic and acidic residues. 2 stretches are compositionally biased toward low complexity: residues 1621–1634 (PTSTTLNTNTTTTP) and 1644–1658 (LQPLQPNTTSTPQQQ). The next 4 helical transmembrane spans lie at 1718–1738 (ISSWYALLANTDLICYIVVFI), 1741–1761 (VVNASLISLPLPIMVFLWGTL), 1770–1790 (FWVTLIAYTQAIVLIKCIFQF), and 1817–1837 (AHYAIYDLILLLVLFLHRYLL). The disordered stretch occupies residues 1854–1876 (FTKPTASIDERDDSDNLSQPDSR). 7 helical membrane passes run 1937 to 1957 (ALMFLCDFVNFFVLLFGFTAF), 1979 to 1999 (IPFLIMLLVQFLLIVIDRALY), 2008 to 2028 (IIFHFFSVIGIHIWMFFVVPA), 2033 to 2053 (TFNSLAPPIIFYVIKCFYMLL), 2075 to 2095 (FSMVNMIAFKVYMQIPFLYEL), 2151 to 2171 (IMGGTIVLLIVICIWGPLCLF), and 2431 to 2451 (TFSFLTAGGIIGLYTTFVLLA). Residues 2522–2551 (EYVDDDGDTDSIPSRMSVRRPEQLQPQQPQ) form a disordered region.

It belongs to the PIEZO (TC 1.A.75) family.

It is found in the cell membrane. Its function is as follows. Component of a mechanosensitive channel required for rapidly adapting mechanically activated (MA) currents. Plays a major role in nociception (response to strong or painful touch). Required for maintaining the mechanosensitivity of tarsal bristle mechanosensors. During their evalulation of potential egg-laying sites, females determine the softest substrate for their eggs first by making a coarse evaluation of substrate hardness using mechanosensitive channels nan and Piezo in the leg tarsal bristles, followed by a much finer assessment using nan, iav and Tmc mechanosensitive channels on the labellum. Acts in the nompC- and nan-expressing neurons of the female leg tarsals, to sense the mild differences in egg-laying substrate stiffness. This chain is Piezo-type mechanosensitive ion channel component, found in Drosophila melanogaster (Fruit fly).